Here is a 930-residue protein sequence, read N- to C-terminus: Isoleucine--tRNA ligase (930 aa).

Positions 57–67 (PYANGNIHVGH) match the 'HIGH' region motif. Glutamate 554 lines the L-isoleucyl-5'-AMP pocket. Positions 595–599 (KMSKS) match the 'KMSKS' region motif. Lysine 598 contacts ATP. Zn(2+)-binding residues include cysteine 888, cysteine 891, cysteine 908, and cysteine 911.

This sequence belongs to the class-I aminoacyl-tRNA synthetase family. IleS type 1 subfamily. As to quaternary structure, monomer. Requires Zn(2+) as cofactor.

It is found in the cytoplasm. It catalyses the reaction tRNA(Ile) + L-isoleucine + ATP = L-isoleucyl-tRNA(Ile) + AMP + diphosphate. Its function is as follows. Catalyzes the attachment of isoleucine to tRNA(Ile). As IleRS can inadvertently accommodate and process structurally similar amino acids such as valine, to avoid such errors it has two additional distinct tRNA(Ile)-dependent editing activities. One activity is designated as 'pretransfer' editing and involves the hydrolysis of activated Val-AMP. The other activity is designated 'posttransfer' editing and involves deacylation of mischarged Val-tRNA(Ile). In Streptococcus gordonii (strain Challis / ATCC 35105 / BCRC 15272 / CH1 / DL1 / V288), this protein is Isoleucine--tRNA ligase.